The chain runs to 123 residues: Small ribosomal subunit protein uS12c (123 aa).

Residues 1–20 (MPTIQQLIRNTRQPTQNRTK) show a composition bias toward polar residues. The tract at residues 1–27 (MPTIQQLIRNTRQPTQNRTKSPALKAC) is disordered.

This sequence belongs to the universal ribosomal protein uS12 family. As to quaternary structure, part of the 30S ribosomal subunit.

The protein resides in the plastid. It localises to the chloroplast. With S4 and S5 plays an important role in translational accuracy. Located at the interface of the 30S and 50S subunits. The sequence is that of Small ribosomal subunit protein uS12c (rps12) from Zygnema circumcarinatum (Green alga).